The sequence spans 173 residues: MVDSYDDSLDGEKSKSQVKRELHALVDLGERLTTLKPDLLNKLPLTDALRRALADAPKHVAHIARKRHLQFIGKLMRDQDTDAILQLLDQLDASTRQYNERFHNLERWRDRLIGGGDDVLEKFVGEYPDADRQQLRSLIRQAQHELAHNKAPASSRKIFKYIRELDETQRGLR.

This sequence belongs to the DarP family.

The protein localises to the cytoplasm. In terms of biological role, member of a network of 50S ribosomal subunit biogenesis factors which assembles along the 30S-50S interface, preventing incorrect 23S rRNA structures from forming. Promotes peptidyl transferase center (PTC) maturation. This chain is Dual-action ribosomal maturation protein DarP, found in Pseudomonas fluorescens (strain ATCC BAA-477 / NRRL B-23932 / Pf-5).